A 663-amino-acid chain; its full sequence is Methionine--tRNA ligase (663 aa).

Positions 10 to 20 (AYTNGPLHLGH) match the 'HIGH' region motif. Residues C142, C145, C154, and C157 each contribute to the Zn(2+) site. The short motif at 323–327 (KMSTS) is the 'KMSKS' region element. T326 is a binding site for ATP. A tRNA-binding domain is found at 563 to 663 (YFTKVDLRVG…REISLGSKIH (101 aa)).

Belongs to the class-I aminoacyl-tRNA synthetase family. MetG type 1 subfamily. Homodimer. Zn(2+) serves as cofactor.

The protein localises to the cytoplasm. The enzyme catalyses tRNA(Met) + L-methionine + ATP = L-methionyl-tRNA(Met) + AMP + diphosphate. Is required not only for elongation of protein synthesis but also for the initiation of all mRNA translation through initiator tRNA(fMet) aminoacylation. This Methanococcus vannielii (strain ATCC 35089 / DSM 1224 / JCM 13029 / OCM 148 / SB) protein is Methionine--tRNA ligase.